An 81-amino-acid chain; its full sequence is Large ribosomal subunit protein bL31B (81 aa).

It belongs to the bacterial ribosomal protein bL31 family. Type B subfamily. As to quaternary structure, part of the 50S ribosomal subunit.

The protein is Large ribosomal subunit protein bL31B of Bdellovibrio bacteriovorus (strain ATCC 15356 / DSM 50701 / NCIMB 9529 / HD100).